A 494-amino-acid polypeptide reads, in one-letter code: Vacuolar-processing enzyme (494 aa).

The N-terminal stretch at 1-20 (MTRLASGVLITLLVALAGIA) is a signal peptide. N151 carries an N-linked (GlcNAc...) asparagine glycan. The active site involves H178. The Nucleophile role is filled by C220. Residues C253 and C267 are joined by a disulfide bond. N336 carries N-linked (GlcNAc...) asparagine glycosylation. Disulfide bonds link C430/C460 and C442/C477.

The protein belongs to the peptidase C13 family. As to expression, high levels are seen in the flowers, a lower level expression is seen in the leaves, while very low levels are seen in the stems and roots.

Its function is as follows. Asparagine-specific endopeptidase that may be involved in processing of proteins targeted to vacuoles that accumulate during ethylene-regulated processes such as flower opening and flavedo degreening. The protein is Vacuolar-processing enzyme of Citrus sinensis (Sweet orange).